The sequence spans 385 residues: 8-amino-7-oxononanoate synthase (385 aa).

Residue R21 participates in substrate binding. Pyridoxal 5'-phosphate is bound at residue 108–109; the sequence is GF. Position 133 (H133) interacts with substrate. Residues S179, H207, and T233 each coordinate pyridoxal 5'-phosphate. At K236 the chain carries N6-(pyridoxal phosphate)lysine. T352 serves as a coordination point for substrate.

This sequence belongs to the class-II pyridoxal-phosphate-dependent aminotransferase family. BioF subfamily. In terms of assembly, homodimer. Pyridoxal 5'-phosphate is required as a cofactor.

It catalyses the reaction 6-carboxyhexanoyl-[ACP] + L-alanine + H(+) = (8S)-8-amino-7-oxononanoate + holo-[ACP] + CO2. Its pathway is cofactor biosynthesis; biotin biosynthesis. In terms of biological role, catalyzes the decarboxylative condensation of pimeloyl-[acyl-carrier protein] and L-alanine to produce 8-amino-7-oxononanoate (AON), [acyl-carrier protein], and carbon dioxide. The protein is 8-amino-7-oxononanoate synthase of Salmonella schwarzengrund (strain CVM19633).